Here is a 969-residue protein sequence, read N- to C-terminus: Dual serine/threonine and tyrosine protein kinase (969 aa).

Residues 7-37 (QEFRRYLRNRNQLQHVLEETQQALELINLEN) are a coiled coil. The Protein kinase domain occupies 632 to 894 (PHCAEEIGRG…PLLGAIVPVL (263 aa)). Residues 638 to 646 (IGRGQYGIV) and K662 each bind ATP. D760 (proton acceptor) is an active-site residue. The interval 904 to 945 (SKSLQEVSSDKLQESSTDSRNPALALAEPYNQRGTVVSPPPT) is disordered.

The protein belongs to the protein kinase superfamily. Ser/Thr protein kinase family.

It localises to the cytoplasm. It carries out the reaction L-seryl-[protein] + ATP = O-phospho-L-seryl-[protein] + ADP + H(+). It catalyses the reaction L-threonyl-[protein] + ATP = O-phospho-L-threonyl-[protein] + ADP + H(+). The enzyme catalyses L-tyrosyl-[protein] + ATP = O-phospho-L-tyrosyl-[protein] + ADP + H(+). The polypeptide is Dual serine/threonine and tyrosine protein kinase (Apis mellifera (Honeybee)).